We begin with the raw amino-acid sequence, 342 residues long: MTDSSTDPSLSFSDAITHARGGNDLSAEQTGALIDAMLQGAANEEEVGQLLLALREKGEAVSELVGAARAMRKHMTRIDHEHDVLLDTCGTGGSGSGTFNISTAVAILASACGVAVAKHGNRRATSKTGSADVLECLGVKIESEPDQVSRRLNDIGICFCFAAKLHPAMRHVVSVRRKLAVPTLFNLLGPLCNPAGATHQLLGTAAPETQQKIAAALAELDTQRSYVLHAQDGQDEVSLDGETSCIEVASGTQQNHTWTPADFGLTPVHQNALAAADPPESAEIIRNLFGGSPGSHRDTVLAGCAAALRLVGRVSSLTEGVEIAAEAIDSKAAQDKLKQLAE.

5-phospho-alpha-D-ribose 1-diphosphate-binding positions include Gly90, 93-94, Thr98, 100-103, 118-126, and Ser130; these read GS, NIST, and KHGNRRATS. Anthranilate is bound at residue Gly90. Residue Ser102 coordinates Mg(2+). Asn121 contributes to the anthranilate binding site. Arg176 lines the anthranilate pocket. 2 residues coordinate Mg(2+): Asp235 and Glu236.

The protein belongs to the anthranilate phosphoribosyltransferase family. In terms of assembly, homodimer. Mg(2+) is required as a cofactor.

It catalyses the reaction N-(5-phospho-beta-D-ribosyl)anthranilate + diphosphate = 5-phospho-alpha-D-ribose 1-diphosphate + anthranilate. It participates in amino-acid biosynthesis; L-tryptophan biosynthesis; L-tryptophan from chorismate: step 2/5. Functionally, catalyzes the transfer of the phosphoribosyl group of 5-phosphorylribose-1-pyrophosphate (PRPP) to anthranilate to yield N-(5'-phosphoribosyl)-anthranilate (PRA). This chain is Anthranilate phosphoribosyltransferase, found in Rhodopirellula baltica (strain DSM 10527 / NCIMB 13988 / SH1).